The chain runs to 286 residues: Large ribosomal subunit protein uL4m (286 aa).

The N-terminal 26 residues, 1-26 (MTIKRNLVKTLQSIRYQATTATAHAE), are a transit peptide targeting the mitochondrion. The segment at 85 to 132 (RRVGASNPPGRSENGFSRRKLMPQKGSGRARVGDANSPTRHNGGRALA) is disordered.

It belongs to the universal ribosomal protein uL4 family. In terms of assembly, component of the mitochondrial large ribosomal subunit (mt-LSU). Mature yeast 74S mitochondrial ribosomes consist of a small (37S) and a large (54S) subunit. The 37S small subunit contains a 15S ribosomal RNA (15S mt-rRNA) and 34 different proteins. The 54S large subunit contains a 21S rRNA (21S mt-rRNA) and 46 different proteins.

Its subcellular location is the mitochondrion. Component of the mitochondrial ribosome (mitoribosome), a dedicated translation machinery responsible for the synthesis of mitochondrial genome-encoded proteins, including at least some of the essential transmembrane subunits of the mitochondrial respiratory chain. The mitoribosomes are attached to the mitochondrial inner membrane and translation products are cotranslationally integrated into the membrane. This is Large ribosomal subunit protein uL4m (YML6) from Saccharomyces cerevisiae (strain ATCC 204508 / S288c) (Baker's yeast).